We begin with the raw amino-acid sequence, 107 residues long: Small ribosomal subunit protein uS10c (107 aa).

The protein belongs to the universal ribosomal protein uS10 family. As to quaternary structure, part of the 30S ribosomal subunit.

It localises to the plastid. The protein resides in the chloroplast. Functionally, involved in the binding of tRNA to the ribosomes. The sequence is that of Small ribosomal subunit protein uS10c from Thalassiosira pseudonana (Marine diatom).